The following is a 452-amino-acid chain: MDDIFTQCREGNAVAVRLWLDNTENDLNQGDDHGFSPLHWACREGRSNVVDMLIMRGARINVMNRGDDTPLHLAASHGHRDIVQKLIQFKADINAVNEHGNTPLHYACFWGHDTVAEDLVGNGALVSIANKYSETPIDKAKMPLREILKERAEKLGQNLTKIPYKDTFWKGTTRTRPRNGTLNKLAGIDFKQLSLSQKLNENQSGELWKGRWQGNDIVIKMLKIRDWTTRKSRDFNEEYPKLRIFSHPNVLPVLGACQSPPAPHPIVISHWMPYGSLYNVLHEGTNFVVDQMQAVKFAFDIARGMAFLHTLEPLIPRHHLNSRSIMIDEDMTARISMADVKFSFQCPGRMYAPAWVAPEALQKKPEEINRRSADMWSFAVLLWELVTREVPFADLSNMEIGMKVALEGLRPTIPPGISPHICKLMKICMNEDPAKRPKFDMIVPILEKMQDK.

5 ANK repeats span residues 2 to 30, 31 to 63, 64 to 96, 97 to 129, and 130 to 174; these read DDIFTQCREGNAVAVRLWLDNTENDLNQG, DDHGFSPLHWACREGRSNVVDMLIMRGARINVM, NRGDDTPLHLAASHGHRDIVQKLIQFKADINAV, NEHGNTPLHYACFWGHDTVAEDLVGNGALVSIA, and NKYS…GTTR. The 254-residue stretch at 193 to 446 folds into the Protein kinase domain; sequence LSLSQKLNEN…PKFDMIVPIL (254 aa). Residues Asn-200, Asn-202, Ser-204, His-270, Met-272, and Asn-279 each contribute to the ATP site. Mg(2+) is bound at residue Asp-339. Residue Lys-341 coordinates ATP. A Nuclear localization signal motif is present at residues 363-371; that stretch reads KKPEEINRR.

It belongs to the protein kinase superfamily. TKL Ser/Thr protein kinase family. Interacts with PXN/PAXILLIN (via LD motif 4).

The protein localises to the cell junction. It is found in the focal adhesion. It localises to the cell membrane. Its subcellular location is the cell projection. The protein resides in the lamellipodium. The protein localises to the cytoplasm. It is found in the myofibril. It localises to the sarcomere. Its subcellular location is the nucleus. The protein resides in the cytoskeleton. The protein localises to the microtubule organizing center. It is found in the centrosome. It localises to the cell cortex. Its function is as follows. Scaffold protein which mediates protein-protein interactions during a range of cellular events including focal adhesion assembly, cell adhesion and cell migration. The polypeptide is Scaffold protein ILK (Gallus gallus (Chicken)).